A 469-amino-acid polypeptide reads, in one-letter code: UDP-N-acetylmuramate--L-alanine ligase (469 aa).

Position 122-128 (122-128) interacts with ATP; that stretch reads GTHGKTT.

It belongs to the MurCDEF family.

It localises to the cytoplasm. The enzyme catalyses UDP-N-acetyl-alpha-D-muramate + L-alanine + ATP = UDP-N-acetyl-alpha-D-muramoyl-L-alanine + ADP + phosphate + H(+). It functions in the pathway cell wall biogenesis; peptidoglycan biosynthesis. In terms of biological role, cell wall formation. The protein is UDP-N-acetylmuramate--L-alanine ligase of Legionella pneumophila (strain Paris).